We begin with the raw amino-acid sequence, 205 residues long: uncharacterized protein (205 aa).

Residues 1 to 63 (MQRTRELESS…QHPKVAKFLK (63 aa)) are Cytoplasmic-facing. Residues 64-84 (VQLVFDLISLFIFATHQLLLL) traverse the membrane as a helical segment. Residues 85–124 (EDGNFGKHYFKRKTKRCSKFSCSRCNANAHHPKWFKFKHS) are Extracellular-facing. The helical transmembrane segment at 125–145 (LLCLGTFCFGVYSLVKINKFF) threads the bilayer. Over 146 to 205 (KTDQTVDLNRLLELFFWQLNAILNMKLFAFYGDHLESHSAPLDVYEDSFANKSSSGGDEV) the chain is Cytoplasmic.

It localises to the membrane. This is an uncharacterized protein from Saccharomyces cerevisiae (strain ATCC 204508 / S288c) (Baker's yeast).